Here is a 154-residue protein sequence, read N- to C-terminus: Myoglobin (154 aa).

Residues 2–148 (GLSDGEWQLV…FRNDIAAKYK (147 aa)) enclose the Globin domain. The residue at position 4 (S4) is a Phosphoserine. Nitrite is bound at residue H65. H65 contacts O2. Residue T68 is modified to Phosphothreonine. H94 contacts heme b.

Belongs to the globin family. Monomeric.

Its subcellular location is the cytoplasm. The protein resides in the sarcoplasm. It catalyses the reaction Fe(III)-heme b-[protein] + nitric oxide + H2O = Fe(II)-heme b-[protein] + nitrite + 2 H(+). The catalysed reaction is H2O2 + AH2 = A + 2 H2O. Functionally, monomeric heme protein which primary function is to store oxygen and facilitate its diffusion within muscle tissues. Reversibly binds oxygen through a pentacoordinated heme iron and enables its timely and efficient release as needed during periods of heightened demand. Depending on the oxidative conditions of tissues and cells, and in addition to its ability to bind oxygen, it also has a nitrite reductase activity whereby it regulates the production of bioactive nitric oxide. Under stress conditions, like hypoxia and anoxia, it also protects cells against reactive oxygen species thanks to its pseudoperoxidase activity. This Lagostomus maximus (Plains viscacha) protein is Myoglobin (MB).